We begin with the raw amino-acid sequence, 91 residues long: MAQKKGGGSTRNGRDSQPKMLGVKVFGGQRITAGSIIVRQRGTRFHPGSNVGMGKDHSLFALVDGQVSFGIKGALSKPTVNVTPAASAPPV.

Gly residues predominate over residues 1 to 10 (MAQKKGGGST). Residues 1-20 (MAQKKGGGSTRNGRDSQPKM) are disordered.

The protein belongs to the bacterial ribosomal protein bL27 family.

The sequence is that of Large ribosomal subunit protein bL27 from Verminephrobacter eiseniae (strain EF01-2).